We begin with the raw amino-acid sequence, 1248 residues long: Structural maintenance of chromosomes protein 1B (1248 aa).

32 to 39 (GPNGSGKS) provides a ligand contact to ATP. A coiled-coil region spans residues 163–502 (EFIGEYEAKK…EGKRQQKRAE (340 aa)). One can recognise an SMC hinge domain in the interval 514–629 (SVFGRLLDLC…ETVEEARHIA (116 aa)). K648, K713, and K1032 each carry N6-acetyllysine. A coiled-coil region spans residues 666-912 (WDEKELHNLR…REVGKLQKEV (247 aa)). The segment covering 1219 to 1228 (PDTEDQEGSR) has biased composition (basic and acidic residues). Residues 1219–1248 (PDTEDQEGSRSHRKPRVPRVSMSPKSPQSR) form a disordered region.

The protein belongs to the SMC family. SMC1 subfamily. Forms a heterodimer with SMC3. Component of a meiosis-specific cohesin complex, probably composed of the SMC1B and SMC3 heterodimer attached via their SMC hinge domain, RAD21 (or its meiosis-specific related protein REC8), which link them, and STAG3, which interacts with RAD21 or REC8. The cohesin complex interacts with the cohesin loading complex subunits NIPBL/Scc2 (via HEAT repeats) and MAU2/Scc4. NIPBL directly contacts all members of the complex, RAD21, SMC1A/B, SMC3 and STAG1. Spermatocytes (at protein level). Testis and ovary specific. Not expressed in somatic cells.

It localises to the nucleus. Its subcellular location is the chromosome. The protein resides in the centromere. In terms of biological role, meiosis-specific component of cohesin complex. Required for the maintenance of meiotic cohesion, but not, or only to a minor extent, for its establishment. Contributes to axial element (AE) formation and the organization of chromatin loops along the AE. Plays a key role in synapsis, recombination and chromosome movements. The cohesin complex is required for the cohesion of sister chromatids after DNA replication. The cohesin complex apparently forms a large proteinaceous ring within which sister chromatids can be trapped. At anaphase, the complex is cleaved and dissociates from chromatin, allowing sister chromatids to segregate. The meiosis-specific cohesin complex probably replaces mitosis specific cohesin complex when it dissociates from chromatin during prophase I. In Mus musculus (Mouse), this protein is Structural maintenance of chromosomes protein 1B (Smc1b).